A 383-amino-acid chain; its full sequence is MRMTAIISEYNPFHNGHLYQAKIARQETGADLIVAIMSGTFTQRGEPAFTDKWTRAQAAVASGEIDLVLELPFYFAVQRADRFALGGVTIAETIGAESLSFGSECGQLEPFIEAAAENQEATPRYQELMQEGLARGLSSATAASHAFREMTTTLDLTTPNNTLGYYYARAASTITLHTTKRIGSGYHDLSTGDIMSATAIRAYHATHHSLIGLPELTAETLRNAVFASFEPYYPFIRHRLLTTPLDDLMQFNGIDSSLAPRLIEGARKNETFDNFMTAVKTRRYTRTSLQRVLIYLLTSSKSSEFENIAFDRIDYVRPLAFNDNGRLALREIKQRIPVISTFEKHPWLIKESHVTAAYAVPLARYDRLEEHRRFAHFAGSVSK.

Residues 7–20 (ISEY…HLYQ), G102, N160, and 181–182 (RI) each bind ATP.

This sequence belongs to the TmcAL family.

The protein localises to the cytoplasm. It carries out the reaction cytidine(34) in elongator tRNA(Met) + acetate + ATP = N(4)-acetylcytidine(34) in elongator tRNA(Met) + AMP + diphosphate. In terms of biological role, catalyzes the formation of N(4)-acetylcytidine (ac(4)C) at the wobble position of elongator tRNA(Met), using acetate and ATP as substrates. First activates an acetate ion to form acetyladenylate (Ac-AMP) and then transfers the acetyl group to tRNA to form ac(4)C34. The protein is tRNA(Met) cytidine acetate ligase of Exiguobacterium sibiricum (strain DSM 17290 / CCUG 55495 / CIP 109462 / JCM 13490 / 255-15).